An 824-amino-acid polypeptide reads, in one-letter code: Neuronal PAS domain-containing protein 2 (824 aa).

Residues 1 to 10 (MDEDEKDRAK) show a composition bias toward basic and acidic residues. The interval 1–21 (MDEDEKDRAKRASRNKSEKKR) is disordered. The sufficient for heterodimer formation with BMAL1, E-box binding and for the effect of NADPH stretch occupies residues 1–61 (MDEDEKDRAK…VIGFLQKHNE (61 aa)). The bHLH domain occupies 9–59 (AKRASRNKSEKKRRDQFNVLIKELSSMLPGNTRKMDKTTVLEKVIGFLQKH). Positions 82 to 152 (NEEFTQLMLE…KILSSHMLVT (71 aa)) constitute a PAS 1 domain. Residues histidine 119 and histidine 171 each coordinate heme b. The PAS 2 domain maps to 237–307 (FLKEMCIVDE…RCHQHLMQFG (71 aa)). Residues 311–354 (SCCYRFLTKGQQWIWLQTHYYITYHQWNSKPEFIVCTHSVVSYA) enclose the PAC domain. Disordered stretches follow at residues 367–437 (EDPP…MAEA), 556–667 (SSTQ…PDFS), 681–704 (QPMM…RQVK), and 739–824 (PSFP…QPPR). Residues 378-390 (ALKDKGSSLEPRQ) show a composition bias toward basic and acidic residues. A compositionally biased stretch (polar residues) spans 421–431 (TAMSEPTSTPT). The span at 559–576 (QRPEAQQQLQQRSAAVTQ) shows a compositional bias: low complexity. Positions 587 to 610 (GQISSAQVTSQHLLRESSVISTQG) are enriched in polar residues. A compositionally biased stretch (low complexity) spans 614-636 (MRSSQLMQSSGRSGSSLVSPFSS). Polar residues-rich tracts occupy residues 645-664 (LNLT…QPSP) and 694-704 (SEVSRTGRQVK). Residues 739-760 (PSFPASQPSPLQPAQARQQPPQ) show a composition bias toward low complexity. Positions 766–789 (QAPTSLHSEQQDSLLLSTYSQQPG) are enriched in polar residues. Over residues 794–805 (PQPPPAQPQPLR) the composition is skewed to pro residues. A compositionally biased stretch (low complexity) spans 809-824 (RVSSLSESSGLQQPPR).

As to quaternary structure, component of the circadian clock oscillator which includes the CRY proteins, CLOCK or NPAS2, BMAL1 or BMAL2, CSNK1D and/or CSNK1E, TIMELESS and the PER proteins. Efficient DNA binding requires dimerization with another bHLH protein. Forms a heterodimer with BMAL1 and this heterodimerization is required for E-box-dependent transactivation. Interacts with NCOA3, KAT2B, CREBBP and EP300. It depends on heme as a cofactor.

The protein localises to the nucleus. With respect to regulation, carbon monoxide (CO) and the redox state of the cell can modulate the transcriptional activity of the NPAS2-BMAL1 heterodimer. NADH and NADPH enhance the DNA-binding activity of the heterodimer whereas CO binds the heme group in NPAS2 and inhibits the DNA-binding activity of the heterodimer. In terms of biological role, transcriptional activator which forms a core component of the circadian clock. The circadian clock, an internal time-keeping system, regulates various physiological processes through the generation of approximately 24 hour circadian rhythms in gene expression, which are translated into rhythms in metabolism and behavior. It is derived from the Latin roots 'circa' (about) and 'diem' (day) and acts as an important regulator of a wide array of physiological functions including metabolism, sleep, body temperature, blood pressure, endocrine, immune, cardiovascular, and renal function. Consists of two major components: the central clock, residing in the suprachiasmatic nucleus (SCN) of the brain, and the peripheral clocks that are present in nearly every tissue and organ system. Both the central and peripheral clocks can be reset by environmental cues, also known as Zeitgebers (German for 'timegivers'). The predominant Zeitgeber for the central clock is light, which is sensed by retina and signals directly to the SCN. The central clock entrains the peripheral clocks through neuronal and hormonal signals, body temperature and feeding-related cues, aligning all clocks with the external light/dark cycle. Circadian rhythms allow an organism to achieve temporal homeostasis with its environment at the molecular level by regulating gene expression to create a peak of protein expression once every 24 hours to control when a particular physiological process is most active with respect to the solar day. Transcription and translation of core clock components (CLOCK, NPAS2, BMAL1, BMAL2, PER1, PER2, PER3, CRY1 and CRY2) plays a critical role in rhythm generation, whereas delays imposed by post-translational modifications (PTMs) are important for determining the period (tau) of the rhythms (tau refers to the period of a rhythm and is the length, in time, of one complete cycle). A diurnal rhythm is synchronized with the day/night cycle, while the ultradian and infradian rhythms have a period shorter and longer than 24 hours, respectively. Disruptions in the circadian rhythms contribute to the pathology of cardiovascular diseases, cancer, metabolic syndromes and aging. A transcription/translation feedback loop (TTFL) forms the core of the molecular circadian clock mechanism. Transcription factors, CLOCK or NPAS2 and BMAL1 or BMAL2, form the positive limb of the feedback loop, act in the form of a heterodimer and activate the transcription of core clock genes and clock-controlled genes (involved in key metabolic processes), harboring E-box elements (5'-CACGTG-3') within their promoters. The core clock genes: PER1/2/3 and CRY1/2 which are transcriptional repressors form the negative limb of the feedback loop and interact with the CLOCK|NPAS2-BMAL1|BMAL2 heterodimer inhibiting its activity and thereby negatively regulating their own expression. This heterodimer also activates nuclear receptors NR1D1/2 and RORA/B/G, which form a second feedback loop and which activate and repress BMAL1 transcription, respectively. The NPAS2-BMAL1 heterodimer positively regulates the expression of MAOA, F7 and LDHA and modulates the circadian rhythm of daytime contrast sensitivity by regulating the rhythmic expression of adenylate cyclase type 1 (ADCY1) in the retina. NPAS2 plays an important role in sleep homeostasis and in maintaining circadian behaviors in normal light/dark and feeding conditions and in the effective synchronization of feeding behavior with scheduled food availability. Regulates the gene transcription of key metabolic pathways in the liver and is involved in DNA damage response by regulating several cell cycle and DNA repair genes. Controls the circadian rhythm of NR0B2 expression by binding rhythmically to its promoter. Mediates the diurnal variation in the expression of GABARA1 receptor in the brain and contributes to the regulation of anxiety-like behaviors and GABAergic neurotransmission in the ventral striatum. This chain is Neuronal PAS domain-containing protein 2 (NPAS2), found in Homo sapiens (Human).